The chain runs to 450 residues: Aspartyl/glutamyl-tRNA(Asn/Gln) amidotransferase subunit B (450 aa).

The protein belongs to the GatB/GatE family. GatB subfamily. Heterotrimer of A, B and C subunits.

The enzyme catalyses L-glutamyl-tRNA(Gln) + L-glutamine + ATP + H2O = L-glutaminyl-tRNA(Gln) + L-glutamate + ADP + phosphate + H(+). The catalysed reaction is L-aspartyl-tRNA(Asn) + L-glutamine + ATP + H2O = L-asparaginyl-tRNA(Asn) + L-glutamate + ADP + phosphate + 2 H(+). In terms of biological role, allows the formation of correctly charged Asn-tRNA(Asn) or Gln-tRNA(Gln) through the transamidation of misacylated Asp-tRNA(Asn) or Glu-tRNA(Gln) in organisms which lack either or both of asparaginyl-tRNA or glutaminyl-tRNA synthetases. The reaction takes place in the presence of glutamine and ATP through an activated phospho-Asp-tRNA(Asn) or phospho-Glu-tRNA(Gln). This is Aspartyl/glutamyl-tRNA(Asn/Gln) amidotransferase subunit B from Methanobrevibacter smithii (strain ATCC 35061 / DSM 861 / OCM 144 / PS).